We begin with the raw amino-acid sequence, 2523 residues long: uncharacterized protein (2523 aa).

The protein belongs to the mycobacterial PPE family.

Its function is as follows. Probably plays a role in host phagosome maturation arrest. This is an uncharacterized protein from Mycobacterium tuberculosis (strain ATCC 25618 / H37Rv).